A 367-amino-acid chain; its full sequence is Tetraacyldisaccharide 4'-kinase (367 aa).

Val68–Thr75 contacts ATP.

The protein belongs to the LpxK family.

It carries out the reaction a lipid A disaccharide + ATP = a lipid IVA + ADP + H(+). It participates in glycolipid biosynthesis; lipid IV(A) biosynthesis; lipid IV(A) from (3R)-3-hydroxytetradecanoyl-[acyl-carrier-protein] and UDP-N-acetyl-alpha-D-glucosamine: step 6/6. Functionally, transfers the gamma-phosphate of ATP to the 4'-position of a tetraacyldisaccharide 1-phosphate intermediate (termed DS-1-P) to form tetraacyldisaccharide 1,4'-bis-phosphate (lipid IVA). The chain is Tetraacyldisaccharide 4'-kinase from Chlamydia caviae (strain ATCC VR-813 / DSM 19441 / 03DC25 / GPIC) (Chlamydophila caviae).